Here is a 551-residue protein sequence, read N- to C-terminus: E-selectin (551 aa).

The N-terminal stretch at Met1–Thr23 is a signal peptide. The region spanning Trp24–Tyr141 is the C-type lectin domain. Topologically, residues Trp24–Pro495 are extracellular. Asn32 and Asn45 each carry an N-linked (GlcNAc...) asparagine glycan. 17 cysteine pairs are disulfide-bonded: Cys42/Cys140, Cys113/Cys132, Cys145/Cys156, Cys150/Cys165, Cys167/Cys176, Cys182/Cys226, Cys195/Cys208, Cys212/Cys239, Cys244/Cys288, Cys257/Cys270, Cys274/Cys301, Cys306/Cys351, Cys337/Cys364, Cys369/Cys414, Cys400/Cys427, Cys432/Cys473, and Cys459/Cys486. Residues Glu103, Asn105, and Glu111 each coordinate Ca(2+). A carbohydrate-binding positions include Glu103–Glu111, Glu115–Arg120, and Asn128–Glu130. Residues Asn128 and Asp129 each contribute to the Ca(2+) site. The EGF-like domain occupies Thr142–Glu177. Asn162 carries N-linked (GlcNAc...) asparagine glycosylation. Sushi domains lie at Val180–Val241, Val242–Ala303, Ser305–Ala366, Lys368–Val429, and Val430–Glu488. Asn194, Asn201, and Asn205 each carry an N-linked (GlcNAc...) asparagine glycan. Asn267 carries N-linked (GlcNAc...) asparagine glycosylation. Residues Asn314, Asn321, and Asn334 are each glycosylated (N-linked (GlcNAc...) asparagine). Asn442 and Asn466 each carry an N-linked (GlcNAc...) asparagine glycan. The chain crosses the membrane as a helical span at residues Leu496–Phe517. Topologically, residues Leu518–Ile551 are cytoplasmic.

The protein belongs to the selectin/LECAM family. In terms of assembly, interacts with SELPLG/PSGL1 and PODXL2 through the sialyl Lewis X epitope. SELPLG sulfation appears not to be required for this interaction.

The protein localises to the cell membrane. In terms of biological role, cell-surface glycoprotein having a role in immunoadhesion. Mediates in the adhesion of blood neutrophils in cytokine-activated endothelium through interaction with SELPLG/PSGL1. May have a role in capillary morphogenesis. The polypeptide is E-selectin (SELE) (Oryctolagus cuniculus (Rabbit)).